The sequence spans 256 residues: 1-(5-phosphoribosyl)-5-[(5-phosphoribosylamino)methylideneamino] imidazole-4-carboxamide isomerase (256 aa).

Asp8 serves as the catalytic Proton acceptor. The active-site Proton donor is the Asp130.

This sequence belongs to the HisA/HisF family.

Its subcellular location is the cytoplasm. It catalyses the reaction 1-(5-phospho-beta-D-ribosyl)-5-[(5-phospho-beta-D-ribosylamino)methylideneamino]imidazole-4-carboxamide = 5-[(5-phospho-1-deoxy-D-ribulos-1-ylimino)methylamino]-1-(5-phospho-beta-D-ribosyl)imidazole-4-carboxamide. It participates in amino-acid biosynthesis; L-histidine biosynthesis; L-histidine from 5-phospho-alpha-D-ribose 1-diphosphate: step 4/9. This Chlorobium phaeovibrioides (strain DSM 265 / 1930) (Prosthecochloris vibrioformis (strain DSM 265)) protein is 1-(5-phosphoribosyl)-5-[(5-phosphoribosylamino)methylideneamino] imidazole-4-carboxamide isomerase.